Consider the following 521-residue polypeptide: Ankyrin repeat domain-containing protein 34B (521 aa).

ANK repeat units follow at residues 9 to 38 (TESNSLIKAVYQSRLRLTRLLLEGGAYINE), 42 to 79 (RGETPLMIACKTKHVDHQSVSKVKMIKYLLENNADPNI), 83 to 113 (FGKTALMHACLENAGAEVVSLLLESGADPSL), and 117 to 146 (TGFSALVYAVNSEDKETLRILLNACKAKGK). The segment at 161 to 188 (QTTRQYLNVPPSPGIEGNNSPSPCTSPS) is disordered. The span at 177-188 (GNNSPSPCTSPS) shows a compositional bias: polar residues.

It belongs to the ANKRD34 family.

The protein localises to the cytoplasm. It is found in the nucleus. This chain is Ankyrin repeat domain-containing protein 34B (ankrd34b), found in Xenopus laevis (African clawed frog).